The sequence spans 210 residues: Putative protein-lysine deacylase ABHD14B (210 aa).

At S91 the chain carries Phosphoserine. Active-site charge relay system residues include S111, D162, and H188.

It belongs to the AB hydrolase superfamily. ABHD14 family. May interact with TAF1.

It is found in the cytoplasm. The protein localises to the nucleus. It catalyses the reaction L-lysyl-[protein] + acetyl-CoA = N(6)-acetyl-L-lysyl-[protein] + CoA + H(+). Acts as an atypical protein-lysine deacetylase in vitro. Catalyzes the deacetylation of lysine residues using CoA as substrate, generating acetyl-CoA and the free amine of protein-lysine residues. Additional experiments are however required to confirm the protein-lysine deacetylase activity in vivo. Has hydrolase activity towards various surrogate p-nitrophenyl (pNp) substrates, such as pNp-butyrate, pNp-acetate and pNp-octanoate in vitro, with a strong preference for pNp-acetate. May activate transcription. In Rattus norvegicus (Rat), this protein is Putative protein-lysine deacylase ABHD14B.